Here is a 253-residue protein sequence, read N- to C-terminus: 5-oxoprolinase subunit A (253 aa).

It belongs to the LamB/PxpA family. As to quaternary structure, forms a complex composed of PxpA, PxpB and PxpC.

The catalysed reaction is 5-oxo-L-proline + ATP + 2 H2O = L-glutamate + ADP + phosphate + H(+). Its function is as follows. Catalyzes the cleavage of 5-oxoproline to form L-glutamate coupled to the hydrolysis of ATP to ADP and inorganic phosphate. This is 5-oxoprolinase subunit A from Bacillus thuringiensis subsp. konkukian (strain 97-27).